A 266-amino-acid polypeptide reads, in one-letter code: Putative pyruvate, phosphate dikinase regulatory protein (266 aa).

147 to 154 (GLSRTSKT) serves as a coordination point for ADP.

It belongs to the pyruvate, phosphate/water dikinase regulatory protein family. PDRP subfamily.

The catalysed reaction is N(tele)-phospho-L-histidyl/L-threonyl-[pyruvate, phosphate dikinase] + ADP = N(tele)-phospho-L-histidyl/O-phospho-L-threonyl-[pyruvate, phosphate dikinase] + AMP + H(+). It catalyses the reaction N(tele)-phospho-L-histidyl/O-phospho-L-threonyl-[pyruvate, phosphate dikinase] + phosphate + H(+) = N(tele)-phospho-L-histidyl/L-threonyl-[pyruvate, phosphate dikinase] + diphosphate. In terms of biological role, bifunctional serine/threonine kinase and phosphorylase involved in the regulation of the pyruvate, phosphate dikinase (PPDK) by catalyzing its phosphorylation/dephosphorylation. The protein is Putative pyruvate, phosphate dikinase regulatory protein of Clostridium perfringens (strain 13 / Type A).